A 40-amino-acid chain; its full sequence is Subtilisin-like serine protease AS-E1 (40 aa).

The 37-residue stretch at 4 to 40 (PWGLARISHRTTGATSYVYDDSAGEGTCSYIIDTGIY) folds into the Peptidase S8 domain. D36 acts as the Charge relay system in catalysis.

It belongs to the peptidase S8 family. Homodimer.

Its activity is regulated as follows. Strongly inhibited by antipain and PMSF. Inhibited by benzamidine and aprotinin by 80% and 17% respectively. Little or no inhibition by EDTA, E-64, iodoacetic acid, leupeptin and FUT-175. Functionally, subtilisin-like serine protease. Cleaves prothrombin at 155-Arg-|-Ser-156, 45-Thr-|-Ala-46 and 316-Tyr-|-Ile-317 to produce meizothrombin(desF1)-like molecules. Degrades fibrinogen. Inhibits plasma coagulation. The protein is Subtilisin-like serine protease AS-E1 of Acremonium sp.